We begin with the raw amino-acid sequence, 548 residues long: Hydroxylamine reductase (548 aa).

[4Fe-4S] cluster is bound by residues Cys3, Cys6, Cys15, and Cys21. The hybrid [4Fe-2O-2S] cluster site is built by His240, Glu264, Cys308, Cys402, Cys430, Cys455, Glu490, and Lys492. Cys402 is subject to Cysteine persulfide.

The protein belongs to the HCP family. Requires [4Fe-4S] cluster as cofactor. Hybrid [4Fe-2O-2S] cluster is required as a cofactor.

The protein localises to the cytoplasm. It catalyses the reaction A + NH4(+) + H2O = hydroxylamine + AH2 + H(+). Its function is as follows. Catalyzes the reduction of hydroxylamine to form NH(3) and H(2)O. This is Hydroxylamine reductase from Parabacteroides distasonis (strain ATCC 8503 / DSM 20701 / CIP 104284 / JCM 5825 / NCTC 11152).